The chain runs to 365 residues: TD and POZ domain-containing protein 1 (365 aa).

Residues 19 to 149 (KFCYKWTISN…EDQLTICCKV (131 aa)) form the MATH domain. The BTB domain maps to 188-250 (TDCCLLVAGH…EMMGFIYTGK (63 aa)).

It belongs to the Tdpoz family.

This chain is TD and POZ domain-containing protein 1, found in Mus musculus (Mouse).